Reading from the N-terminus, the 89-residue chain is Phosphocarrier protein HPr (89 aa).

The HPr domain occupies A2 to G89. Residue H15 is the Pros-phosphohistidine intermediate of the active site. S46 carries the post-translational modification Phosphoserine; by HPrK/P.

The protein belongs to the HPr family.

The protein resides in the cytoplasm. With respect to regulation, phosphorylation on Ser-46 inhibits the phosphoryl transfer from enzyme I to HPr. Functionally, general (non sugar-specific) component of the phosphoenolpyruvate-dependent sugar phosphotransferase system (sugar PTS). This major carbohydrate active-transport system catalyzes the phosphorylation of incoming sugar substrates concomitantly with their translocation across the cell membrane. The phosphoryl group from phosphoenolpyruvate (PEP) is transferred to the phosphoryl carrier protein HPr by enzyme I. Phospho-HPr then transfers it to the PTS EIIA domain. Its function is as follows. P-Ser-HPr interacts with the catabolite control protein A (CcpA), forming a complex that binds to DNA at the catabolite response elements cre, operator sites preceding a large number of catabolite-regulated genes. Thus, P-Ser-HPr is a corepressor in carbon catabolite repression (CCR), a mechanism that allows bacteria to coordinate and optimize the utilization of available carbon sources. P-Ser-HPr also plays a role in inducer exclusion, in which it probably interacts with several non-PTS permeases and inhibits their transport activity. The sequence is that of Phosphocarrier protein HPr (ptsH) from Mycoplasma capricolum subsp. capricolum (strain California kid / ATCC 27343 / NCTC 10154).